Consider the following 100-residue polypeptide: Small ubiquitin-related modifier 1 (100 aa).

The segment covering 1–12 (MSAAGEEDKKPA) has biased composition (basic and acidic residues). A disordered region spans residues 1 to 23 (MSAAGEEDKKPAGGEGGGAHINL). The 78-residue stretch at 19 to 96 (AHINLKVKGQ…IDAMLHQTGG (78 aa)) folds into the Ubiquitin-like domain. Gly-96 participates in a covalent cross-link: Glycyl lysine isopeptide (Gly-Lys) (interchain with K-? in acceptor proteins).

Belongs to the ubiquitin family. SUMO subfamily. As to quaternary structure, interacts with SAE2, SCE1 and SIZ1. Covalently attached to a number of proteins.

The protein resides in the nucleus. The protein localises to the cytoplasm. Its function is as follows. Ubiquitin-like protein which can be covalently attached to target lysines as a monomer. Does not seem to be involved in protein degradation and may function as an antagonist of ubiquitin in the degradation process. The sequence is that of Small ubiquitin-related modifier 1 (SUMO1) from Oryza sativa subsp. japonica (Rice).